Consider the following 185-residue polypeptide: Ribosome-recycling factor (185 aa).

Positions 142-165 are disordered; the sequence is IVKDGDAGEDEGSRAEKELDGLTK.

Belongs to the RRF family.

It is found in the cytoplasm. In terms of biological role, responsible for the release of ribosomes from messenger RNA at the termination of protein biosynthesis. May increase the efficiency of translation by recycling ribosomes from one round of translation to another. This Renibacterium salmoninarum (strain ATCC 33209 / DSM 20767 / JCM 11484 / NBRC 15589 / NCIMB 2235) protein is Ribosome-recycling factor.